Here is a 95-residue protein sequence, read N- to C-terminus: Large ribosomal subunit protein bL25 (95 aa).

The interval 1 to 20 is disordered; it reads MSFKFNAEVRSKQGKGASRR.

Belongs to the bacterial ribosomal protein bL25 family. In terms of assembly, part of the 50S ribosomal subunit; part of the 5S rRNA/L5/L18/L25 subcomplex. Contacts the 5S rRNA. Binds to the 5S rRNA independently of L5 and L18.

In terms of biological role, this is one of the proteins that binds to the 5S RNA in the ribosome where it forms part of the central protuberance. The sequence is that of Large ribosomal subunit protein bL25 from Histophilus somni (strain 129Pt) (Haemophilus somnus).